A 208-amino-acid chain; its full sequence is uncharacterized protein (208 aa).

Disordered regions lie at residues 1–78 (MDLF…SPTE) and 154–208 (RRRS…PRNY). Over residues 40-51 (KNHKKAQPRRTT) the composition is skewed to basic residues. Over residues 179–197 (ANSSSPNPTATGSETSYGS) the composition is skewed to polar residues.

This is an uncharacterized protein from Caenorhabditis elegans.